The sequence spans 109 residues: Small ribosomal subunit protein uS17 (109 aa).

It belongs to the universal ribosomal protein uS17 family. As to quaternary structure, part of the 30S ribosomal subunit.

Functionally, one of the primary rRNA binding proteins, it binds specifically to the 5'-end of 16S ribosomal RNA. The polypeptide is Small ribosomal subunit protein uS17 (Thermoplasma volcanium (strain ATCC 51530 / DSM 4299 / JCM 9571 / NBRC 15438 / GSS1)).